Reading from the N-terminus, the 212-residue chain is Hevein-like preproprotein (212 aa).

The N-terminal stretch at 1–21 (MKIRLSITIILLSYTVATVAG) is a signal peptide. The 43-residue stretch at 22 to 64 (QQCGRQGGGRTCPGNICCSQYGYCGTTADYCSPTNNCQSNCWG) folds into the Chitin-binding type-1 domain. Cystine bridges form between Cys-24/Cys-39, Cys-33/Cys-45, Cys-38/Cys-52, Cys-58/Cys-62, Cys-100/Cys-132, Cys-121/Cys-155, and Cys-135/Cys-191. The region spanning 72 to 193 (ESASNVRATY…VDYQFVDCGN (122 aa)) is the Barwin domain.

As to quaternary structure, CB-HEL interacts strongly with a fungal fruiting body lectin.

The protein localises to the vacuole. Fungal growth inhibitors. Neither CB-HEL nor CD-HEL have chitinase activity, but both have antimicrobial activities. CD-HEL has RNase, but no DNase activity. The chain is Hevein-like preproprotein (HEL) from Arabidopsis thaliana (Mouse-ear cress).